Here is a 114-residue protein sequence, read N- to C-terminus: Ribonuclease P protein component (114 aa).

The protein belongs to the RnpA family. As to quaternary structure, consists of a catalytic RNA component (M1 or rnpB) and a protein subunit.

The catalysed reaction is Endonucleolytic cleavage of RNA, removing 5'-extranucleotides from tRNA precursor.. RNaseP catalyzes the removal of the 5'-leader sequence from pre-tRNA to produce the mature 5'-terminus. It can also cleave other RNA substrates such as 4.5S RNA. The protein component plays an auxiliary but essential role in vivo by binding to the 5'-leader sequence and broadening the substrate specificity of the ribozyme. This Legionella pneumophila (strain Paris) protein is Ribonuclease P protein component.